The sequence spans 660 residues: Zinc transporter ZIP4 (660 aa).

Residues 1–22 form the signal peptide; the sequence is MLPKSVTQGLVLALLVGTVAVA. Over 23-337 the chain is Extracellular; it reads RPRNLLSLLA…QDQLSQTERY (315 aa). 3 cysteine pairs are disulfide-bonded: Cys56/Cys61, Cys64/Cys110, and Cys160/Cys195. N-linked (GlcNAc...) asparagine glycans are attached at residues Asn192 and Asn219. A disordered region spans residues 233–273; the sequence is GVGGEDHSDHDDHGDHADHSHPDRKASHQDSELHTPHNSNS. Basic and acidic residues predominate over residues 236-267; the sequence is GEDHSDHDDHGDHADHSHPDRKASHQDSELHT. Asn272 carries N-linked (GlcNAc...) asparagine glycosylation. A disulfide bridge connects residues Cys280 and Cys319. Residues 338–358 form a helical membrane-spanning segment; that stretch reads LYGSLATLLICLCAVFGLLLL. Over 359–376 the chain is Cytoplasmic; that stretch reads TCAKCSTATHYIMQTFLS. A helical membrane pass occupies residues 377 to 397; the sequence is LAVGALTGDALLHLIPKVLGL. At 398–420 the chain is on the extracellular side; the sequence is HTHGGEGHTHEEEVGVGGQATWR. Residues 421–441 traverse the membrane as a helical segment; it reads LLAVLGGFYIFFLFESFFNLL. The Cytoplasmic portion of the chain corresponds to 442-511; that stretch reads LPRDQDSEKD…LRAELRLLPY (70 aa). Positions 465–467 match the Essential for SLC39A4 endocytosis motif; that stretch reads LQL. Residues 512–531 traverse the membrane as a helical segment; it reads LITLGDAVHNFADGLAVGAA. His520, Asn521, and Asp524 together coordinate Zn(2+). Over 532–539 the chain is Extracellular; the sequence is FSSSWKTG. The chain crosses the membrane as a helical span at residues 540 to 566; the sequence is LATSLAVFCHELPHELGDFAALLHAGL. Zn(2+)-binding residues include His549, Glu550, and His553. At 567–571 the chain is on the cytoplasmic side; the sequence is SVKRA. The chain crosses the membrane as a helical span at residues 572 to 592; that stretch reads LLLNLASALTAFAGLYVALAV. The Extracellular segment spans residues 593–599; it reads GVGEEGE. Residues 600-620 traverse the membrane as a helical segment; it reads AWILAVATGLFLYVALCDMLP. At 621–630 the chain is on the cytoplasmic side; it reads AMMNVRDQRP. Residues 631–651 form a helical membrane-spanning segment; the sequence is WLLFLLHNVGLLGGWTVLLLL. The Extracellular segment spans residues 652–660; sequence SLYEDNITF. N-linked (GlcNAc...) asparagine glycosylation occurs at Asn657.

This sequence belongs to the ZIP transporter (TC 2.A.5) family. As to quaternary structure, homodimer. Homodimerization is mediated by the transmembrane domain. The extracellular N-terminal ectodomain is cleaved when cells are Zn(2+) deficient, N-terminally cleaved SLC39A4 is then internalized faster. In terms of processing, under excess Zn(2+) conditions, SLC39A4 on the cell surface is rapidly endocytosed, ubiquitinated, and degraded. Post-translationally, N-glycosylated. Highly expressed in the small intestine and embryonic visceral yolk sac. Weakly expressed in the stomach and liver.

It is found in the cell membrane. Its subcellular location is the recycling endosome membrane. The protein localises to the apical cell membrane. It carries out the reaction Zn(2+)(in) = Zn(2+)(out). In terms of biological role, selective transporter that mediates the uptake of Zn(2+). Plays an essential role for dietary zinc uptake from small intestine. The Zn(2+) uniporter activity is regulated by zinc availability. Also exhibits polyspecific binding and transport of Cu(2+), Cd(2+) and possibly Ni(2+) but at higher concentrations. This chain is Zinc transporter ZIP4 (Slc39a4), found in Mus musculus (Mouse).